Here is a 271-residue protein sequence, read N- to C-terminus: Probable ribosomal RNA small subunit methyltransferase A (271 aa).

The S-adenosyl-L-methionine site is built by asparagine 22, leucine 24, glycine 49, glutamate 70, aspartate 97, and asparagine 112.

It belongs to the class I-like SAM-binding methyltransferase superfamily. rRNA adenine N(6)-methyltransferase family. RsmA subfamily.

It localises to the cytoplasm. In terms of biological role, specifically dimethylates two adjacent adenosines in the loop of a conserved hairpin near the 3'-end of 16S rRNA in the 30S particle. May play a critical role in biogenesis of 30S subunits. The protein is Probable ribosomal RNA small subunit methyltransferase A of Methanosphaera stadtmanae (strain ATCC 43021 / DSM 3091 / JCM 11832 / MCB-3).